Here is a 246-residue protein sequence, read N- to C-terminus: tRNA (guanine-N(1)-)-methyltransferase (246 aa).

S-adenosyl-L-methionine contacts are provided by residues glycine 117 and 137-142; that span reads IGDYVL.

This sequence belongs to the RNA methyltransferase TrmD family. As to quaternary structure, homodimer.

It localises to the cytoplasm. It carries out the reaction guanosine(37) in tRNA + S-adenosyl-L-methionine = N(1)-methylguanosine(37) in tRNA + S-adenosyl-L-homocysteine + H(+). In terms of biological role, specifically methylates guanosine-37 in various tRNAs. The polypeptide is tRNA (guanine-N(1)-)-methyltransferase (Acinetobacter baumannii (strain ACICU)).